Consider the following 115-residue polypeptide: Nascent polypeptide-associated complex protein (115 aa).

Residues 6 to 72 (PMNPKQLKKL…SEEEKAIINI (67 aa)) enclose the NAC-A/B domain.

The protein belongs to the NAC-alpha family. As to quaternary structure, homodimer. Interacts with the ribosome. Binds ribosomal RNA.

Its function is as follows. Contacts the emerging nascent chain on the ribosome. The polypeptide is Nascent polypeptide-associated complex protein (Pyrococcus horikoshii (strain ATCC 700860 / DSM 12428 / JCM 9974 / NBRC 100139 / OT-3)).